Consider the following 428-residue polypeptide: Adenylosuccinate synthetase (428 aa).

Residues G12–K18 and G40–T42 contribute to the GTP site. D13 (proton acceptor) is an active-site residue. Residues D13 and G40 each contribute to the Mg(2+) site. IMP contacts are provided by residues D13–K16, N38–H41, T130, R144, Q225, T240, and R304. The Proton donor role is filled by H41. Substrate is bound at residue V300–R306. Residues R306, K332–D334, and S414–G416 each bind GTP.

Belongs to the adenylosuccinate synthetase family. As to quaternary structure, homodimer. Mg(2+) is required as a cofactor.

Its subcellular location is the cytoplasm. It catalyses the reaction IMP + L-aspartate + GTP = N(6)-(1,2-dicarboxyethyl)-AMP + GDP + phosphate + 2 H(+). It functions in the pathway purine metabolism; AMP biosynthesis via de novo pathway; AMP from IMP: step 1/2. Its function is as follows. Plays an important role in the de novo pathway of purine nucleotide biosynthesis. Catalyzes the first committed step in the biosynthesis of AMP from IMP. In Clostridium kluyveri (strain ATCC 8527 / DSM 555 / NBRC 12016 / NCIMB 10680 / K1), this protein is Adenylosuccinate synthetase.